Consider the following 163-residue polypeptide: Cyclic pyranopterin monophosphate synthase (163 aa).

Substrate-binding positions include 75-77 (LCH) and 113-114 (ME). Asp-128 is an active-site residue.

It belongs to the MoaC family. In terms of assembly, homohexamer; trimer of dimers.

It catalyses the reaction (8S)-3',8-cyclo-7,8-dihydroguanosine 5'-triphosphate = cyclic pyranopterin phosphate + diphosphate. Its pathway is cofactor biosynthesis; molybdopterin biosynthesis. Functionally, catalyzes the conversion of (8S)-3',8-cyclo-7,8-dihydroguanosine 5'-triphosphate to cyclic pyranopterin monophosphate (cPMP). This chain is Cyclic pyranopterin monophosphate synthase, found in Magnetococcus marinus (strain ATCC BAA-1437 / JCM 17883 / MC-1).